A 79-amino-acid polypeptide reads, in one-letter code: Large ribosomal subunit protein uL24 (79 aa).

Belongs to the universal ribosomal protein uL24 family. In terms of assembly, part of the 50S ribosomal subunit.

Its function is as follows. One of two assembly initiator proteins, it binds directly to the 5'-end of the 23S rRNA, where it nucleates assembly of the 50S subunit. Functionally, one of the proteins that surrounds the polypeptide exit tunnel on the outside of the subunit. This is Large ribosomal subunit protein uL24 from Lactobacillus gasseri (strain ATCC 33323 / DSM 20243 / BCRC 14619 / CIP 102991 / JCM 1131 / KCTC 3163 / NCIMB 11718 / NCTC 13722 / AM63).